The following is a 269-amino-acid chain: Ribosomal RNA small subunit methyltransferase J (269 aa).

S-adenosyl-L-methionine contacts are provided by residues 125–126 (ER) and Asp-179.

It belongs to the methyltransferase superfamily. RsmJ family.

It is found in the cytoplasm. The enzyme catalyses guanosine(1516) in 16S rRNA + S-adenosyl-L-methionine = N(2)-methylguanosine(1516) in 16S rRNA + S-adenosyl-L-homocysteine + H(+). Its function is as follows. Specifically methylates the guanosine in position 1516 of 16S rRNA. This Pseudomonas syringae pv. syringae (strain B728a) protein is Ribosomal RNA small subunit methyltransferase J.